The primary structure comprises 124 residues: Small ribosomal subunit protein uS12 (124 aa).

Aspartate 89 carries the 3-methylthioaspartic acid modification.

The protein belongs to the universal ribosomal protein uS12 family. Part of the 30S ribosomal subunit. Contacts proteins S8 and S17. May interact with IF1 in the 30S initiation complex.

With S4 and S5 plays an important role in translational accuracy. Functionally, interacts with and stabilizes bases of the 16S rRNA that are involved in tRNA selection in the A site and with the mRNA backbone. Located at the interface of the 30S and 50S subunits, it traverses the body of the 30S subunit contacting proteins on the other side and probably holding the rRNA structure together. The combined cluster of proteins S8, S12 and S17 appears to hold together the shoulder and platform of the 30S subunit. This chain is Small ribosomal subunit protein uS12, found in Baumannia cicadellinicola subsp. Homalodisca coagulata.